Reading from the N-terminus, the 278-residue chain is Transmembrane protein 45B (278 aa).

The next 7 membrane-spanning stretches (helical) occupy residues 7-27, 49-69, 95-115, 117-137, 149-169, 183-203, and 215-235; these read HALP…KYPL, IIEG…EQFV, YLFF…FNIV, LGLD…LFYF, IHSL…LEVI, LLIL…PPFG, and VMFI…ITAI. 2 positions are modified to phosphoserine: Ser-273 and Ser-275.

Belongs to the TMEM45 family.

The protein resides in the endosome membrane. The protein localises to the lysosome membrane. It localises to the golgi apparatus. It is found in the trans-Golgi network membrane. In terms of biological role, plays a role in innate immunity. In Rattus norvegicus (Rat), this protein is Transmembrane protein 45B (Tmem45b).